The chain runs to 74 residues: Small ribosomal subunit protein eS28 (74 aa).

It belongs to the eukaryotic ribosomal protein eS28 family.

The polypeptide is Small ribosomal subunit protein eS28 (Halobacterium salinarum (strain ATCC 29341 / DSM 671 / R1)).